The sequence spans 838 residues: MWGRLWPLLLSILTATAVPGPSLRRPSRELDATPRMTIPYEELSGTRHFKGQAQNYSTLLLEEASARLLVGARGALFSLSANDIGDGAHKEIHWEASPEMQSKCHQKGKNNQTECFNHVRFLQRLNSTHLYACGTHAFQPLCAAIDAEAFTLPTSFEEGKEKCPYDPARGFTGLIIDGGLYTATRYEFRSIPDIRRSRHPHSLRTEETPMHWLNDAEFVFSVLVRESKASAVGDDDKVYYFFTERATEEGSGSFTQSRSSHRVARVARVCKGDLGGKKILQKKWTSFLKARLICHIPLYETLRGVCSLDAETSSRTHFYAAFTLSTQWKTLEASAICRYDLAEIQAVFAGPYMEYQDGSRRWGRYEGGVPEPRPGSCITDSLRSQGYNSSQDLPSLVLDFVKLHPLMARPVVPTRGRPLLLKRNIRYTHLTGTPVTTPAGPTYDLLFLGTADGWIHKAVVLGSGMHIIEETQVFRESQSVENLVISLLQHSLYVGAPSGVIQLPLSSCSRYRSCYDCILARDPYCGWDPGTHACAAATTIANRTALIQDIERGNRGCESSRDTGPPPPLKTRSVLRGDDVLLPCDQPSNLARALWLLNGSMGLSDGQGGYRVGVDGLLVTDAQPEHSGNYGCYAEENGLRTLLASYSLTVRPATPAPAPKAPATPGAQLAPDVRLLYVLAIAALGGLCLILASSLLYVACLREGRRGRRRKYSLGRASRAGGSAVQLQTVSGQCPGEEDEGDDEGAGGLEGSCLQIIPGEGAPAPPPPPPPPPPAELTNGLVALPSRLRRMNGNSYVLLRQSNNGVPAGPCSFAEELSRILEKRKHTQLVEQLDESSV.

Positions 1–17 (MWGRLWPLLLSILTATA) are cleaved as a signal peptide. The Extracellular segment spans residues 18–675 (VPGPSLRRPS…GAQLAPDVRL (658 aa)). Residues 35 to 505 (RMTIPYEELS…APSGVIQLPL (471 aa)) enclose the Sema domain. N-linked (GlcNAc...) asparagine glycans are attached at residues asparagine 55, asparagine 111, and asparagine 126. The cysteines at positions 104 and 115 are disulfide-linked. Intrachain disulfides connect cysteine 133–cysteine 142, cysteine 270–cysteine 377, and cysteine 294–cysteine 337. Asparagine 388 carries N-linked (GlcNAc...) asparagine glycosylation. The region spanning 507-558 (SCSRYRSCYDCILARDPYCGWDPGTHACAAATTIANRTALIQDIERGNRGCE) is the PSI domain. Cystine bridges form between cysteine 508–cysteine 525 and cysteine 517–cysteine 534. 2 N-linked (GlcNAc...) asparagine glycosylation sites follow: asparagine 542 and asparagine 598. The region spanning 567 to 649 (PPLKTRSVLR…RTLLASYSLT (83 aa)) is the Ig-like C2-type domain. Cysteine 584 and cysteine 632 form a disulfide bridge. The chain crosses the membrane as a helical span at residues 676–696 (LYVLAIAALGGLCLILASSLL). The Cytoplasmic segment spans residues 697-838 (YVACLREGRR…LVEQLDESSV (142 aa)). The interval 723 to 777 (SAVQLQTVSGQCPGEEDEGDDEGAGGLEGSCLQIIPGEGAPAPPPPPPPPPPAEL) is disordered. Acidic residues predominate over residues 736–745 (GEEDEGDDEG). A compositionally biased stretch (pro residues) spans 763–775 (PAPPPPPPPPPPA). Residues serine 795 and serine 837 each carry the phosphoserine modification.

It belongs to the semaphorin family. As to quaternary structure, interacts with PLXNB2.

The protein resides in the cell membrane. Functionally, cell surface receptor for PLXNB2. May play a role in axon guidance. The protein is Semaphorin-4G (SEMA4G) of Homo sapiens (Human).